The primary structure comprises 405 residues: Nuclear RNA export factor 2 (405 aa).

Residues 1-33 (MRGQNRRGYRNIEGRLSLSSHSSHSSPRQTHVT) form a disordered region. The segment covering 16–26 (LSLSSHSSHSS) has biased composition (low complexity). The 69-residue stretch at 26 to 94 (SPRQTHVTNL…SVVLQHIGYK (69 aa)) folds into the RRM domain. LRR repeat units lie at residues 97–118 (RISG…SSLS) and 123–144 (FLKF…KKLG). The NTF2 domain maps to 215–382 (LVEEFIITYY…VAIVSDQLFI (168 aa)).

Belongs to the NXF family.

Its subcellular location is the nucleus. Functionally, involved in the export of cellular mRNA to the cytoplasm. Plays a role in the nuclear retention of unspliced mRNAs. In Caenorhabditis elegans, this protein is Nuclear RNA export factor 2.